A 295-amino-acid chain; its full sequence is Pyridoxal 5'-phosphate synthase subunit PdxS (295 aa).

Position 25 (D25) interacts with D-ribose 5-phosphate. K82 functions as the Schiff-base intermediate with D-ribose 5-phosphate in the catalytic mechanism. Residue G154 participates in D-ribose 5-phosphate binding. Residue R166 coordinates D-glyceraldehyde 3-phosphate. Residues G215 and 236-237 (GS) each bind D-ribose 5-phosphate.

The protein belongs to the PdxS/SNZ family. In terms of assembly, in the presence of PdxT, forms a dodecamer of heterodimers.

It catalyses the reaction aldehydo-D-ribose 5-phosphate + D-glyceraldehyde 3-phosphate + L-glutamine = pyridoxal 5'-phosphate + L-glutamate + phosphate + 3 H2O + H(+). It functions in the pathway cofactor biosynthesis; pyridoxal 5'-phosphate biosynthesis. In terms of biological role, catalyzes the formation of pyridoxal 5'-phosphate from ribose 5-phosphate (RBP), glyceraldehyde 3-phosphate (G3P) and ammonia. The ammonia is provided by the PdxT subunit. Can also use ribulose 5-phosphate and dihydroxyacetone phosphate as substrates, resulting from enzyme-catalyzed isomerization of RBP and G3P, respectively. This is Pyridoxal 5'-phosphate synthase subunit PdxS from Natranaerobius thermophilus (strain ATCC BAA-1301 / DSM 18059 / JW/NM-WN-LF).